The sequence spans 521 residues: Aldehyde dehydrogenase, mitochondrial (521 aa).

Residues 1 to 21 (MLRPAALAAARLVLRQGRRLL) constitute a mitochondrion transit peptide. Positions 13 to 28 (VLRQGRRLLSAAPTQA) match the SIFI-degron motif. N6-acetyllysine occurs at positions 56, 77, and 163. 266–271 (GSTEVG) provides a ligand contact to NAD(+). Glutamate 289 acts as the Proton acceptor in catalysis. Cysteine 323 acts as the Nucleophile in catalysis. Lysine 372, lysine 379, lysine 387, lysine 430, lysine 432, lysine 445, and lysine 455 each carry N6-acetyllysine.

Belongs to the aldehyde dehydrogenase family. Homotetramer. In response to mitochondrial stress, the precursor protein is ubiquitinated by the SIFI complex in the cytoplasm before mitochondrial import, leading to its degradation. Within the SIFI complex, UBR4 initiates ubiquitin chain that are further elongated or branched by KCMF1.

It localises to the mitochondrion matrix. It catalyses the reaction an aldehyde + NAD(+) + H2O = a carboxylate + NADH + 2 H(+). Its pathway is alcohol metabolism; ethanol degradation; acetate from ethanol: step 2/2. Its function is as follows. Required for clearance of cellular formaldehyde, a cytotoxic and carcinogenic metabolite that induces DNA damage. In Sus scrofa (Pig), this protein is Aldehyde dehydrogenase, mitochondrial (ALDH2).